Here is a 1054-residue protein sequence, read N- to C-terminus: Desmoglein-1 (1054 aa).

A signal peptide spans 1 to 23 (MNWHFLRTATVLLIFLVVVEINS). Residues 24-49 (EFRIQVRDYNTKNGTIKWHSIRRQKR) constitute a propeptide that is removed on maturation. Asn-36, Asn-110, and Asn-180 each carry an N-linked (GlcNAc...) asparagine glycan. Cadherin domains are found at residues 50-157 (EWIK…PPVF), 158-269 (SMST…IPYM), 270-389 (EPSS…RPGS), and 386-493 (RPGS…KDSE). Topologically, residues 50–566 (EWIKFAAACR…NLSDNVHFGP (517 aa)) are extracellular. The interval 487–554 (GWEKDSEKVT…QSNNNHQELG (68 aa)) is disordered. The segment covering 496-507 (TSSQNSGSSTGD) has biased composition (low complexity). Positions 508-517 (SSGGTGGGGR) are enriched in gly residues. Residues 523 to 534 (GDTTTNTGGKTS) are compositionally biased toward low complexity. Polar residues predominate over residues 542–554 (TQTQSNNNHQELG). An N-linked (GlcNAc...) asparagine glycan is attached at Asn-557. A helical transmembrane segment spans residues 567-587 (AGIGLLIMGFLVLGLVPFLLM). Residues 588–1054 (CCDCGGAPGA…TKYSTVQYTK (467 aa)) are Cytoplasmic-facing. Desmoglein repeat repeat units lie at residues 830–856 (TYPS…TVTE), 857–886 (SYTT…ERVV), 887–916 (GPIS…ERVI), 917–944 (APSS…ERVI), and 945–973 (RPAS…ERVV). The interval 1018 to 1040 (GHVRSSSDHHFSQTLGSASPSTA) is disordered. Positions 1029 to 1040 (SQTLGSASPSTA) are enriched in polar residues.

Binds to JUP/plakoglobin. Interacts with PKP2. Interacts with DSC3; there is evidence to suggest that the interaction promotes cell-cell adhesion of keratinocytes.

The protein resides in the cell membrane. The protein localises to the cell junction. It localises to the desmosome. It is found in the cytoplasm. Its subcellular location is the nucleus. Functionally, component of intercellular desmosome junctions. Involved in the interaction of plaque proteins and intermediate filaments mediating cell-cell adhesion. This chain is Desmoglein-1 (DSG1), found in Canis lupus familiaris (Dog).